The chain runs to 473 residues: MIHLIKDILTSEPKGQAIDVYGWVRTKRETKNLVFIEINDGSCFASIQATFDRDTGLDNNTEALLKKAGTGVSVKVSGNLVPSPAAGQRVELQANNIHIFGDADQEKYPLQKKRHSMEFLRDIAHLRARTNTFGAVARIRSQMAYAIHTFFQERGFQYVHTPIITGSDCEGAGEMFHVTTFDIEETVKKALKEKKDPDSFKIDYSQDFFGKQANLTVSGQLEGETYATALSRIYTFGPTFRAENSNTSRHLAEFWMVEPEMSFFTIKENMELAEEFIVYLLKWALEKCKEDLEFFDSRIKKGLIEMLKNVVNTPFTRLTYTEAIAELEKHIDRFEFKPYWGCDLQSEHERFLTEEVYKGPVIVTNYPKEIKSFYMKLNEDGKTVRAMDVLVPGLGEIIGGSEREENLDILQGRIKELGLREEDYWWYLDLRRYGTVPHSGFGLGFERLLLYVTGMGNIRDVIPFPRAPKLAEF.

The protein belongs to the class-II aminoacyl-tRNA synthetase family. As to quaternary structure, homodimer.

The protein resides in the cytoplasm. It catalyses the reaction tRNA(Asn) + L-asparagine + ATP = L-asparaginyl-tRNA(Asn) + AMP + diphosphate + H(+). This chain is Asparagine--tRNA ligase, found in Treponema denticola (strain ATCC 35405 / DSM 14222 / CIP 103919 / JCM 8153 / KCTC 15104).